A 202-amino-acid chain; its full sequence is Protein lin-28 homolog A (202 aa).

A disordered region spans residues 1–31; it reads MGSVSNQQFAGAKPGEEPSGDSPKAENESQP. The 74-residue stretch at 33 to 106 folds into the CSD domain; that stretch reads HGSGICKWFN…GLESIRVTGP (74 aa). The flexible linker stretch occupies residues 107 to 130; the sequence is GGVFCIGSERRPKSKSLQKRRSKG. 2 CCHC-type zinc fingers span residues 131-148 and 153-170; these read DRCY…ECKL and KKCH…NCPA. Positions 133, 136, 141, 146, 155, 158, 163, and 168 each coordinate Zn(2+). Positions 169–202 are disordered; the sequence is PAKAQQSPSSQGKPAYFREKEDMHSSALLPETRE.

This sequence belongs to the lin-28 family. Monomer.

The protein localises to the cytoplasm. The protein resides in the rough endoplasmic reticulum. It is found in the P-body. Its subcellular location is the stress granule. It localises to the nucleus. The protein localises to the nucleolus. RNA-binding protein that inhibits processing of pre-let-7 miRNAs and regulates translation of mRNAs that control developmental timing, pluripotency and metabolism. Seems to recognize a common structural G-quartet (G4) feature in its miRNA and mRNA targets. 'Translational enhancer' that drives specific mRNAs to polysomes and increases the efficiency of protein synthesis. Its association with the translational machinery and target mRNAs results in an increased number of initiation events per molecule of mRNA and, indirectly, in mRNA stabilization. Suppressor of microRNA (miRNA) biogenesis, including that of let-7. Binds specific target miRNA precursors (pre-miRNAs), recognizing an 5'-GGAG-3' motif found in their terminal loop, and recruits uridylyltransferase. This results in the terminal uridylation of target pre-miRNAs. Uridylated pre-miRNAs fail to be processed by Dicer and undergo degradation. Localized to the periendoplasmic reticulum area, binds to a large number of spliced mRNAs and inhibits the translation of mRNAs destined for the ER, reducing the synthesis of transmembrane proteins, ER or Golgi lumen proteins, and secretory proteins. Binds to and enhances the translation of mRNAs for several metabolic enzymes, increasing glycolysis and oxidative phosphorylation. Which, with the let-7 repression may enhance tissue repair in adult tissue. In Gallus gallus (Chicken), this protein is Protein lin-28 homolog A (LIN28A).